Consider the following 330-residue polypeptide: G-protein coupled receptor 157 (330 aa).

Residues 1–15 (MPTPAPPTELLPWER) are Extracellular-facing. The chain crosses the membrane as a helical span at residues 16 to 36 (AVVLLSCVLSALGSGLLVATH). Topologically, residues 37–48 (ALWPDLRSRARR) are cytoplasmic. A helical membrane pass occupies residues 49–69 (LLLFLSLADLLSAASYFYGVL). Residues 70–87 (QDFAGTSWDCVLQGALST) are Extracellular-facing. The helical transmembrane segment at 88 to 108 (FANTSSFFWTVAIALYLYLNI) threads the bilayer. Over 109–119 (VRATRGPCTDH) the chain is Cytoplasmic. The chain crosses the membrane as a helical span at residues 120-140 (LVWAFHLISWGVPLAITVAAV). The Extracellular portion of the chain corresponds to 141-166 (CLKKIGYDASDVSVGWCWINLEAEDR). The chain crosses the membrane as a helical span at residues 167–187 (VLWMLLTGKLWEMLAYILLPL). The Cytoplasmic segment spans residues 188–227 (LYLLVRKHINRAHQALSEYRPIWEGRQLQRGSPTSMADKK). The helical transmembrane segment at 228-250 (LILIPFIFICLRVWSTVRFVLTL) threads the bilayer. Over 251–259 (CGSPVVQAP) the chain is Extracellular. The helical transmembrane segment at 260–282 (VLVVLHGIGNTFQGGANCIMFVL) threads the bilayer. At 283–330 (CTRAVRTRLFSLCCCYPRPPTQNPPGASIPPKMGESQESRRTPEVPST) the chain is on the cytoplasmic side. Residues 303-330 (TQNPPGASIPPKMGESQESRRTPEVPST) are disordered. Positions 317–330 (ESQESRRTPEVPST) are enriched in basic and acidic residues.

It belongs to the G-protein coupled receptor 2 family.

It is found in the cell projection. Its subcellular location is the cilium membrane. Its function is as follows. Orphan receptor that promotes neuronal differentiation of radial glial progenitors (RGPs). The activity of this receptor is mediated by a G(q)-protein that activates a phosphatidylinositol-calcium second messenger. The chain is G-protein coupled receptor 157 (Gpr157) from Rattus norvegicus (Rat).